A 110-amino-acid polypeptide reads, in one-letter code: Protein YcgL (110 aa).

Positions 14–98 (MFCVIYRSSK…PPEDLLKQHL (85 aa)) constitute a YcgL domain. The interval 88-110 (PPPEDLLKQHLSSVGQNTSHADR) is disordered. A compositionally biased stretch (polar residues) spans 97–110 (HLSSVGQNTSHADR).

This is Protein YcgL from Salmonella typhi.